A 367-amino-acid polypeptide reads, in one-letter code: RYamide receptor (367 aa).

Over Met-1–Ser-35 the chain is Extracellular. Residues Asn-4, Asn-8, and Asn-21 are each glycosylated (N-linked (GlcNAc...) asparagine). The helical transmembrane segment at Met-36–Leu-56 threads the bilayer. Residues Ser-57 to Asn-66 lie on the Cytoplasmic side of the membrane. A helical membrane pass occupies residues Phe-67 to Thr-87. Topologically, residues Ser-88–Ser-113 are extracellular. N-linked (GlcNAc...) asparagine glycosylation is present at Asn-107. The helical transmembrane segment at Val-114–Trp-134 threads the bilayer. The Cytoplasmic segment spans residues Pro-135–Arg-143. Residues Phe-144–Ala-164 traverse the membrane as a helical segment. The Extracellular portion of the chain corresponds to Thr-165–Gln-212. The helical transmembrane segment at Tyr-213–Cys-233 threads the bilayer. Topologically, residues His-234–Met-258 are cytoplasmic. Residues Met-259 to Phe-279 traverse the membrane as a helical segment. Over Lys-280–His-282 the chain is Extracellular. The chain crosses the membrane as a helical span at residues Ile-283 to Ala-303. At Cys-304–Ala-367 the chain is on the cytoplasmic side.

The protein belongs to the G-protein coupled receptor 1 family.

It localises to the cell membrane. Functionally, receptor for the neuropeptides RYamide-1 and RYamide-2. The activity of this receptor is mediated by G proteins which activate a phosphatidyl-inositol-calcium second messenger system. RYamide-2 is the most potent activator. This Tribolium castaneum (Red flour beetle) protein is RYamide receptor.